We begin with the raw amino-acid sequence, 384 residues long: D-galactosamine-6-phosphate deaminase AgaS (384 aa).

SIS domains lie at 45–197 and 215–364; these read LEPL…SQTF and SEGV…PDTP.

It belongs to the SIS family. AgaS subfamily.

It carries out the reaction D-galactosamine 6-phosphate + H2O = D-tagatopyranose 1-phosphate + NH4(+). Functionally, catalyzes the isomerization-deamination of galactosamine 6-phosphate to form tagatofuranose 6-phosphate and ammonium ion. The sequence is that of D-galactosamine-6-phosphate deaminase AgaS from Escherichia coli O157:H7.